The chain runs to 148 residues: SsrA-binding protein (148 aa).

This sequence belongs to the SmpB family.

Its subcellular location is the cytoplasm. Required for rescue of stalled ribosomes mediated by trans-translation. Binds to transfer-messenger RNA (tmRNA), required for stable association of tmRNA with ribosomes. tmRNA and SmpB together mimic tRNA shape, replacing the anticodon stem-loop with SmpB. tmRNA is encoded by the ssrA gene; the 2 termini fold to resemble tRNA(Ala) and it encodes a 'tag peptide', a short internal open reading frame. During trans-translation Ala-aminoacylated tmRNA acts like a tRNA, entering the A-site of stalled ribosomes, displacing the stalled mRNA. The ribosome then switches to translate the ORF on the tmRNA; the nascent peptide is terminated with the 'tag peptide' encoded by the tmRNA and targeted for degradation. The ribosome is freed to recommence translation, which seems to be the essential function of trans-translation. The polypeptide is SsrA-binding protein (Ehrlichia ruminantium (strain Welgevonden)).